We begin with the raw amino-acid sequence, 101 residues long: uncharacterized protein (101 aa).

Positions 1–25 (MISIPFRSTMSRTLVFIILPTVLSC) are cleaved as a signal peptide.

This is an uncharacterized protein from Saccharomyces cerevisiae (strain ATCC 204508 / S288c) (Baker's yeast).